The chain runs to 398 residues: Phospholipase C (398 aa).

The signal sequence occupies residues 1 to 28 (MKRKIYKLLICATIATSLWAVRTTKVYA). Tryptophan 29, histidine 39, aspartate 84, histidine 96, histidine 154, aspartate 158, histidine 164, histidine 176, and glutamate 180 together coordinate Zn(2+). Residues 29–278 (WDGKADGTGT…HDVSDGKDSS (250 aa)) form the Zn-dependent PLC domain. The segment at 275–283 (KDSSANKNV) is linker. Positions 284–398 (NELVAYITTG…ISGNSTYNIK (115 aa)) constitute a PLAT domain. Positions 299, 300, 301, 321, 322, 324, 325, 326, and 365 each coordinate Ca(2+).

Ca(2+) is required as a cofactor. The cofactor is Zn(2+).

Its subcellular location is the secreted. The enzyme catalyses a 1,2-diacyl-sn-glycero-3-phosphocholine + H2O = phosphocholine + a 1,2-diacyl-sn-glycerol + H(+). Functionally, bacterial hemolysins are exotoxins that attack blood cell membranes and cause cell rupture. Constitutes an essential virulence factor in gas gangrene. Binds to eukaryotic membranes where it hydrolyzes both phosphatidylcholine and sphingomyelin, causing cell rupture. The diacylglycerol produced can activate both the arachidonic acid pathway, leading to modulation of the inflammatory response cascade and thrombosis, and protein kinase C, leading to activation of eukaryotic phospholipases and further membrane damage. This chain is Phospholipase C (plc), found in Clostridium perfringens.